The sequence spans 557 residues: Enhancer of polycomb-like protein 1 (557 aa).

2 disordered regions span residues 323–349 and 424–449; these read VKPA…RPQP and QSHN…TYST. Positions 327–337 are enriched in pro residues; it reads APVPTPAPPVK. Residues 429–441 are compositionally biased toward low complexity; sequence LSIPSSTPSTPLS.

It belongs to the enhancer of polycomb family. In terms of assembly, component of the NuA4 histone acetyltransferase complex.

The protein localises to the nucleus. Functionally, component of the NuA4 histone acetyltransferase complex which is involved in transcriptional activation of selected genes principally by acetylation of nucleosomal histone H4 and H2A. The NuA4 complex is also involved in DNA repair. Involved in gene silencing by neighboring heterochromatin, blockage of the silencing spreading along the chromosome, and required for cell cycle progression through G2/M. This chain is Enhancer of polycomb-like protein 1 (epl1), found in Schizosaccharomyces pombe (strain 972 / ATCC 24843) (Fission yeast).